We begin with the raw amino-acid sequence, 168 residues long: SsrA-binding protein (168 aa).

This sequence belongs to the SmpB family.

The protein localises to the cytoplasm. Functionally, required for rescue of stalled ribosomes mediated by trans-translation. Binds to transfer-messenger RNA (tmRNA), required for stable association of tmRNA with ribosomes. tmRNA and SmpB together mimic tRNA shape, replacing the anticodon stem-loop with SmpB. tmRNA is encoded by the ssrA gene; the 2 termini fold to resemble tRNA(Ala) and it encodes a 'tag peptide', a short internal open reading frame. During trans-translation Ala-aminoacylated tmRNA acts like a tRNA, entering the A-site of stalled ribosomes, displacing the stalled mRNA. The ribosome then switches to translate the ORF on the tmRNA; the nascent peptide is terminated with the 'tag peptide' encoded by the tmRNA and targeted for degradation. The ribosome is freed to recommence translation, which seems to be the essential function of trans-translation. In Mycobacterium sp. (strain JLS), this protein is SsrA-binding protein.